A 206-amino-acid chain; its full sequence is Small ribosomal subunit protein uS4 (206 aa).

The region spanning 96-156 (GRLDNVVYRM…EKAKKQARIK (61 aa)) is the S4 RNA-binding domain.

It belongs to the universal ribosomal protein uS4 family. In terms of assembly, part of the 30S ribosomal subunit. Contacts protein S5. The interaction surface between S4 and S5 is involved in control of translational fidelity.

In terms of biological role, one of the primary rRNA binding proteins, it binds directly to 16S rRNA where it nucleates assembly of the body of the 30S subunit. With S5 and S12 plays an important role in translational accuracy. This Aeromonas salmonicida (strain A449) protein is Small ribosomal subunit protein uS4.